Reading from the N-terminus, the 430-residue chain is UDP-N-acetylmuramoylalanine--D-glutamate ligase (430 aa).

109–115 lines the ATP pocket; the sequence is GTDGKST.

This sequence belongs to the MurCDEF family.

The protein localises to the cytoplasm. It carries out the reaction UDP-N-acetyl-alpha-D-muramoyl-L-alanine + D-glutamate + ATP = UDP-N-acetyl-alpha-D-muramoyl-L-alanyl-D-glutamate + ADP + phosphate + H(+). It functions in the pathway cell wall biogenesis; peptidoglycan biosynthesis. Functionally, cell wall formation. Catalyzes the addition of glutamate to the nucleotide precursor UDP-N-acetylmuramoyl-L-alanine (UMA). The polypeptide is UDP-N-acetylmuramoylalanine--D-glutamate ligase (Thermotoga maritima (strain ATCC 43589 / DSM 3109 / JCM 10099 / NBRC 100826 / MSB8)).